The following is a 242-amino-acid chain: NAD(P)H-hydrate epimerase (242 aa).

The YjeF N-terminal domain occupies 11 to 221; sequence AKALDAELMS…KVITKKFNLS (211 aa). (6S)-NADPHX is bound at residue 61 to 65; that stretch reads NNGGD. K(+)-binding residues include Asn-62 and Asp-128. Residues 132-138 and Asp-161 contribute to the (6S)-NADPHX site; that span reads GFSFKGP. Ser-164 provides a ligand contact to K(+).

This sequence belongs to the NnrE/AIBP family. K(+) is required as a cofactor.

It localises to the cytoplasm. Its subcellular location is the mitochondrion. The protein resides in the nucleus. It carries out the reaction (6R)-NADHX = (6S)-NADHX. The catalysed reaction is (6R)-NADPHX = (6S)-NADPHX. Catalyzes the epimerization of the S- and R-forms of NAD(P)HX, a damaged form of NAD(P)H that is a result of enzymatic or heat-dependent hydration. This is a prerequisite for the S-specific NAD(P)H-hydrate dehydratase to allow the repair of both epimers of NAD(P)HX. May have a role in meiosis. This is NAD(P)H-hydrate epimerase (mug182) from Schizosaccharomyces pombe (strain 972 / ATCC 24843) (Fission yeast).